We begin with the raw amino-acid sequence, 305 residues long: UDP-3-O-acyl-N-acetylglucosamine deacetylase (305 aa).

Residues His78, His237, and Asp241 each contribute to the Zn(2+) site. His264 acts as the Proton donor in catalysis.

Belongs to the LpxC family. Zn(2+) is required as a cofactor.

The enzyme catalyses a UDP-3-O-[(3R)-3-hydroxyacyl]-N-acetyl-alpha-D-glucosamine + H2O = a UDP-3-O-[(3R)-3-hydroxyacyl]-alpha-D-glucosamine + acetate. Its pathway is glycolipid biosynthesis; lipid IV(A) biosynthesis; lipid IV(A) from (3R)-3-hydroxytetradecanoyl-[acyl-carrier-protein] and UDP-N-acetyl-alpha-D-glucosamine: step 2/6. Its function is as follows. Catalyzes the hydrolysis of UDP-3-O-myristoyl-N-acetylglucosamine to form UDP-3-O-myristoylglucosamine and acetate, the committed step in lipid A biosynthesis. The sequence is that of UDP-3-O-acyl-N-acetylglucosamine deacetylase from Paraburkholderia xenovorans (strain LB400).